The primary structure comprises 463 residues: Gamma-aminobutyric acid receptor subunit alpha-5 (463 aa).

The N-terminal stretch at methionine 1–serine 25 is a signal peptide. The Extracellular portion of the chain corresponds to serine 26 to phenylalanine 260. Residue asparagine 45 is glycosylated (N-linked (GlcNAc...) asparagine). Arginine 101 provides a ligand contact to 4-aminobutanoate. N-linked (GlcNAc...) asparagine glycosylation is present at asparagine 145. Position 164 (threonine 164) interacts with 4-aminobutanoate. A disulfide bridge links cysteine 173 with cysteine 187. N-linked (GlcNAc...) asparagine glycans are attached at residues asparagine 207 and asparagine 236. The next 3 membrane-spanning stretches (helical) occupy residues valine 261–leucine 281, proline 287–arginine 308, and alanine 319–threonine 340. Topologically, residues valine 341–lysine 428 are cytoplasmic. A Glycyl lysine isopeptide (Lys-Gly) (interchain with G-Cter in ubiquitin) cross-link involves residue lysine 355. The tract at residues proline 387–alanine 408 is disordered. The chain crosses the membrane as a helical span at residues methionine 429–tyrosine 449.

Belongs to the ligand-gated ion channel (TC 1.A.9) family. Gamma-aminobutyric acid receptor (TC 1.A.9.5) subfamily. GABRA5 sub-subfamily. Heteropentamer, formed by a combination of alpha (GABRA1-6), beta (GABRB1-3), gamma (GABRG1-3), delta (GABRD), epsilon (GABRE), rho (GABRR1-3), pi (GABRP) and theta (GABRQ) chains, each subunit exhibiting distinct physiological and pharmacological properties. As to expression, expressed in brain, in hippocampal pyramidal neurons.

The protein resides in the postsynaptic cell membrane. It is found in the cell membrane. It catalyses the reaction chloride(in) = chloride(out). Functionally, alpha subunit of the heteropentameric ligand-gated chloride channel gated by gamma-aminobutyric acid (GABA), a major inhibitory neurotransmitter in the brain. GABA-gated chloride channels, also named GABA(A) receptors (GABAAR), consist of five subunits arranged around a central pore and contain GABA active binding site(s) located at the alpha and beta subunit interface(s). When activated by GABA, GABAARs selectively allow the flow of chloride anions across the cell membrane down their electrochemical gradient. GABAARs containing alpha-5/GABRA5 are mainly extrasynaptic and contribute to the tonic GABAergic inhibition of the hippocampus. Extrasynaptic alpha-5-containing GABAARs in CA1 pyramidal neurons play a role in learning and memory processes. This Mus musculus (Mouse) protein is Gamma-aminobutyric acid receptor subunit alpha-5.